Here is a 122-residue protein sequence, read N- to C-terminus: Large ribosomal subunit protein uL14 (122 aa).

It belongs to the universal ribosomal protein uL14 family. As to quaternary structure, part of the 50S ribosomal subunit. Forms a cluster with proteins L3 and L19. In the 70S ribosome, L14 and L19 interact and together make contacts with the 16S rRNA in bridges B5 and B8.

In terms of biological role, binds to 23S rRNA. Forms part of two intersubunit bridges in the 70S ribosome. In Rickettsia massiliae (strain Mtu5), this protein is Large ribosomal subunit protein uL14.